Reading from the N-terminus, the 133-residue chain is Probable non-specific lipid-transfer protein 2 (133 aa).

The first 31 residues, 1 to 31, serve as a signal peptide directing secretion; the sequence is MRTVSMAALVVIAAALAWTSSAEPAPAPAPG. Cystine bridges form between Cys35/Cys83, Cys45/Cys60, Cys61/Cys106, and Cys81/Cys121.

This sequence belongs to the plant LTP family.

Plant non-specific lipid-transfer proteins transfer phospholipids as well as galactolipids across membranes. May play a role in wax or cutin deposition in the cell walls of expanding epidermal cells and certain secretory tissues. The sequence is that of Probable non-specific lipid-transfer protein 2 from Parietaria judaica (Pellitory-of-the-wall).